Here is a 79-residue protein sequence, read N- to C-terminus: Putative defensin-like protein 137 (79 aa).

A signal peptide spans 1–24; it reads MKKYFQPSFVILIIFTVLVLGVVG. 4 disulfide bridges follow: C33–C78, C42–C62, C47–C72, and C51–C74.

It belongs to the DEFL family.

It localises to the secreted. This chain is Putative defensin-like protein 137 (LCR14), found in Arabidopsis thaliana (Mouse-ear cress).